Reading from the N-terminus, the 348-residue chain is Phospho-2-dehydro-3-deoxyheptonate aldolase, Trp-sensitive (348 aa).

This sequence belongs to the class-I DAHP synthase family.

It carries out the reaction D-erythrose 4-phosphate + phosphoenolpyruvate + H2O = 7-phospho-2-dehydro-3-deoxy-D-arabino-heptonate + phosphate. It functions in the pathway metabolic intermediate biosynthesis; chorismate biosynthesis; chorismate from D-erythrose 4-phosphate and phosphoenolpyruvate: step 1/7. In terms of biological role, stereospecific condensation of phosphoenolpyruvate (PEP) and D-erythrose-4-phosphate (E4P) giving rise to 3-deoxy-D-arabino-heptulosonate-7-phosphate (DAHP). This chain is Phospho-2-dehydro-3-deoxyheptonate aldolase, Trp-sensitive (aroH), found in Escherichia coli O157:H7.